We begin with the raw amino-acid sequence, 87 residues long: Homeotic protein ultrabithorax (87 aa).

The Antp-type hexapeptide signature appears at 22–27 (FYPWMA).

The protein belongs to the Antp homeobox family. As to expression, in the embryo, expression is seen in the epidermis, somatic and visceral mesoderm, and the peripheral and central nervous system.

It localises to the nucleus. Functionally, sequence-specific transcription factor which is part of a developmental regulatory system that provides cells with specific positional identities on the anterior-posterior axis. Binds the consensus region 5'-TTAAT[GT][GA]-3'. This homeotic protein controls development of the cells in the posterior thoracic and first abdominal segments. It activates the synthesis of the decapentaplegic (DPP) growth factor. This chain is Homeotic protein ultrabithorax (Ubx), found in Drosophila hydei (Fruit fly).